A 309-amino-acid chain; its full sequence is S-antigen protein (309 aa).

Residues 1-23 form the signal peptide; it reads MNRILSVSFYLFFLYLYIYKTYG. The interval 52–309 is disordered; that stretch reads GKGNKYEDLQ…KSIMNMLILM (258 aa). The span at 60–86 shows a compositional bias: acidic residues; that stretch reads LQEEGEGENDDEEHSNSEESDNDEENE. The segment covering 93-259 has biased composition (basic and acidic residues); sequence EAPKSDEAEA…DEAEARKSEA (167 aa). Residues 97-256 are 20 X 8 AA approximate tandem repeats of A-[RL]-K-S-D-E-A-E; sequence SDEAEALKSD…RKSDEAEARK (160 aa). 2 repeat units span residues 257–271 and 272–286. The 2 X 15 AA tandem repeats of S-E-A-G-T-E-G-P-K-G-T-G-G-P-G stretch occupies residues 257-286; it reads SEAGTEGPKGTGGPGSEAGTEGPKGTGGPG. Positions 263-289 are enriched in gly residues; that stretch reads GPKGTGGPGSEAGTEGPKGTGGPGSGG.

The protein resides in the parasitophorous vacuole. S antigens are soluble heat-stable proteins present in the sera of some infected individuals. This chain is S-antigen protein, found in Plasmodium falciparum (isolate NF7 / Ghana).